The sequence spans 840 residues: Urease (840 aa).

A Urease domain is found at 402-840; it reads GAIDCHVHYI…VPLSRNYFLF (439 aa). 3 residues coordinate Ni(2+): His-407, His-409, and Lys-490. Lys-490 is modified (N6-carboxylysine). His-492 contacts substrate. Ni(2+) is bound by residues His-519 and His-545. The active-site Proton donor is His-593. Asp-633 contacts Ni(2+).

It in the C-terminal section; belongs to the metallo-dependent hydrolases superfamily. Urease alpha subunit family. As to quaternary structure, homohexamer. Other oligomeric forms may exist depending on pH and presence of salts. It depends on Ni cation as a cofactor. Carboxylation allows a single lysine to coordinate two nickel ions.

It catalyses the reaction urea + 2 H2O + H(+) = hydrogencarbonate + 2 NH4(+). The protein operates within nitrogen metabolism; urea degradation; CO(2) and NH(3) from urea (urease route): step 1/1. Its activity is regulated as follows. P-hydroxymercuribenzoate irreversibly abolishes ureolytic activity, but does not inhibit the ability to activate platelets. Also inhibited by acetohydroxamic acid (AHA), a chelator of Ni2+ and Zn2+ ions. Urea hydrolase involved in nitrogen recycling from ureide, purine, and arginine catabolism. Is known to be highly toxic and lethal when given by intravenous route, producing convulsions and other signs of central nervous system intoxication associated with the high levels of ammonia formed in the blood of mice and rabbits. Is neurotoxic in mammals, when directly injected into hippocampus. It may induce seizures by acting at a neuronal network level, thereby disturbing electroencephalographic rhythms and causing metabolic alterations in key areas related to epileptogenesis and to neurogenic pulmonary edema. It increases calcium influx and neuronal firing rate in the hippocampus. Is able to insert itself into lipid bilayers, altering physicochemical properties of artificial membranes, and forming cation-selective ion channels. In vitro, has the ability to induce platelet aggregation, platelet granules secretion and release of ATP. In contrast to canatoxin, another urease from C.ensiformis, is not lethal to mice when intraperitoneally injected. This Canavalia ensiformis (Jack bean) protein is Urease.